A 514-amino-acid chain; its full sequence is 2-isopropylmalate synthase (514 aa).

The Pyruvate carboxyltransferase domain maps to leucine 5 to valine 268. Mn(2+) is bound by residues aspartate 14, histidine 202, histidine 204, and asparagine 239. A regulatory domain region spans residues lysine 395–serine 514.

Belongs to the alpha-IPM synthase/homocitrate synthase family. LeuA type 1 subfamily. In terms of assembly, homodimer. It depends on Mn(2+) as a cofactor.

The protein resides in the cytoplasm. It carries out the reaction 3-methyl-2-oxobutanoate + acetyl-CoA + H2O = (2S)-2-isopropylmalate + CoA + H(+). The protein operates within amino-acid biosynthesis; L-leucine biosynthesis; L-leucine from 3-methyl-2-oxobutanoate: step 1/4. In terms of biological role, catalyzes the condensation of the acetyl group of acetyl-CoA with 3-methyl-2-oxobutanoate (2-ketoisovalerate) to form 3-carboxy-3-hydroxy-4-methylpentanoate (2-isopropylmalate). The polypeptide is 2-isopropylmalate synthase (Burkholderia ambifaria (strain ATCC BAA-244 / DSM 16087 / CCUG 44356 / LMG 19182 / AMMD) (Burkholderia cepacia (strain AMMD))).